A 352-amino-acid polypeptide reads, in one-letter code: Isoflavone-7-O-methyltransferase 6 (352 aa).

Residue 118–127 (VLDPTLSGSY) coordinates substrate. The S-adenosyl-L-methionine site is built by Gly196, Asp219, Asp239, Met240, and Lys253. The active-site Proton acceptor is the His257.

Belongs to the class I-like SAM-binding methyltransferase superfamily. Cation-independent O-methyltransferase family. COMT subfamily. In terms of assembly, homodimer.

It catalyses the reaction a 7-hydroxyisoflavone + S-adenosyl-L-methionine = a 7-methoxyisoflavone + S-adenosyl-L-homocysteine + H(+). Its pathway is phytoalexin biosynthesis; medicarpin biosynthesis. Its function is as follows. Transfers a methyl group to 7-hydroxyls of the isoflavones daidzein, genistein and 6,7,4'-trihydroxyisoflavone. Can also methylate (+)6a-hydroxymaackiain with lower efficiency. This Medicago sativa (Alfalfa) protein is Isoflavone-7-O-methyltransferase 6.